The sequence spans 1476 residues: ABC transporter G family member 17 (1476 aa).

Disordered regions lie at residues 13 to 45 and 68 to 91; these read SENN…YDYD and FREI…KPEN. Positions 14-67 form a coiled coil; sequence ENNNNNNNNNNNNNNNNNNNLNNNNDNDYDYDSINNIEEKFENVSKELEGQSIK. Residues 15–39 are compositionally biased toward low complexity; the sequence is NNNNNNNNNNNNNNNNNNNLNNNND. The region spanning 151–402 is the ABC transporter 1 domain; sequence LNPFNYFKKD…FLDLGFDCEP (252 aa). In terms of domain architecture, ABC transmembrane type-2 1 spans 507–751; sequence WGDKFTLTSR…SLSVKGENYL (245 aa). 5 helical membrane-spanning segments follow: residues 517–537, 547–567, 592–612, 623–643, and 764–784; these read FLTI…QPLT, AIFT…HGAL, ILID…IVYF, FFIF…LFRG, and LNVV…LFAV. Positions 838–1082 constitute an ABC transporter 2 domain; that stretch reads FSWKSISYTV…LTSYFERHGV (245 aa). ATP is bound at residue 874–881; that stretch reads GSSGAGKT. Transmembrane regions (helical) follow at residues 1182 to 1202, 1219 to 1239, 1260 to 1280, 1298 to 1318, 1322 to 1342, and 1450 to 1470; these read FYTM…GFTF, SWEA…MFFI, LSMI…FFIA, WLMH…LGAA, IAIS…LCGV, and FGII…FVYL. The 224-residue stretch at 1182 to 1405 folds into the ABC transmembrane type-2 2 domain; that stretch reads FYTMGSFAQS…TDCQTYSAPF (224 aa).

Belongs to the ABC transporter superfamily. ABCG family. PDR (TC 3.A.1.205) subfamily.

It is found in the membrane. The polypeptide is ABC transporter G family member 17 (abcG17-1) (Dictyostelium discoideum (Social amoeba)).